The sequence spans 928 residues: Mitogen-activated protein kinase kinase kinase dlk-1 (928 aa).

A disordered region spans residues 1 to 72; sequence MTSTTMVTTL…GQKEGSPDPK (72 aa). A compositionally biased stretch (polar residues) spans 42 to 52; it reads LVTQSAPNTPI. Residues 53–69 show a composition bias toward basic and acidic residues; the sequence is QHREQANAEFGQKEGSP. The 243-residue stretch at 135–377 folds into the Protein kinase domain; that stretch reads ISELEWLGSG…FSHIRQHWEI (243 aa). Residues 141–149 and lysine 162 each bind ATP; that span reads LGSGSQGAV. The Proton acceptor role is filled by aspartate 246. A leucine-zipper region spans residues 459–480; sequence LQGCFTELKLKESELAEWEKDL. Disordered stretches follow at residues 483–575, 644–696, and 802–845; these read REQW…DAIR, RRVS…PSRN, and ENAN…SMES. The span at 509 to 519 shows a compositional bias: acidic residues; the sequence is GYDDMSSDEDV. The segment covering 530 to 557 has biased composition (low complexity); the sequence is SNTSSSSGVQSSPFSRQSSSRSSAGQQT. The segment at 605–814 is important for interaction between isoform a and isoform c; that stretch reads SAGAGSCTAI…NDVDLTSSMD (210 aa). Polar residues predominate over residues 647 to 656; sequence STSVNKSTAV. Over residues 677 to 695 the composition is skewed to low complexity; that stretch reads SCSSPRSSSKLNRSSYPSR. A compositionally biased stretch (acidic residues) spans 823–833; the sequence is ADVESSEEDEG. Phosphoserine occurs at positions 874 and 878. The short motif at 874 to 879 is the SDGLSD hexapeptide element; sequence SDGLSD.

It belongs to the protein kinase superfamily. STE Ser/Thr protein kinase family. MAP kinase kinase kinase subfamily. In terms of assembly, homooligomer (via leucine zipper domain and hexapeptide motif). Isoform a (via leucine zipper domain) forms a heterooligomer with isoform c (via leucine zipper domain). Isoform c does not self-associate. Mg(2+) serves as cofactor. Post-translationally, ubiquitinated by rpm-1. Negatively regulated by ubiquitination by fsn-1 bound rpm-1, followed by degradation. Phosphorylation at Ser-874 and/or at Ser-878 abolishes interaction with isoform c and promotes binding to isoform a kinase domain (likely in trans) resulting in isoform a self-association and activation. As to expression, expressed in nerve ring, nerve cord, neurons, and pharynx.

It is found in the synapse. The protein localises to the cytoplasm. It localises to the cell projection. Its subcellular location is the axon. The protein resides in the dendrite. It is found in the cilium. The enzyme catalyses L-seryl-[protein] + ATP = O-phospho-L-seryl-[protein] + ADP + H(+). It catalyses the reaction L-threonyl-[protein] + ATP = O-phospho-L-threonyl-[protein] + ADP + H(+). With respect to regulation, inactive when associated with isoform c. Dissociation from isoform c, which is dependent on the phosphorylation of the C-terminal hexapeptide, results in self-association and activation. Transient increase in Ca(2+) levels caused by axonal injury or synaptic activity triggers the dissociation of isoform a from isoform c; the dissociation may be influenced by the phosphorylation status of the C-terminal hexapeptide. Component of a MAP kinase pathway that functions presynaptically to regulate synaptic architecture and presynaptic differentiation. Phosphorylates and activates mkk-4. Has a role in axonal regrowth following injury and synaptogenesis. Plays a role in modulating polymerization of neuronal microtubules. Also promotes tubulin post-translational modifications that protect microtubules. Plays a role in cilium length regulation, possibly by reducing rab-5 mediated endocytosis, and may also have a role in intraflagellar transport in cilia. Plays a role in the formation of muscle connections, also called muscle arm extensions, between the body wall and the motor axons in the dorsal and ventral cord. Its function is as follows. Has a role in synapse and axon development, and in axonal regrowth following injury. In terms of biological role, by forming heterooligomers with isoform a, acts as an inhibitor of isoform a activation. Its inhibitory function is independent of its catalytic activity. This is Mitogen-activated protein kinase kinase kinase dlk-1 (dlk-1) from Caenorhabditis elegans.